The sequence spans 34 residues: Photosystem II reaction center protein Y (34 aa).

Over 1-5 (DWRVL) the chain is Lumenal. A helical transmembrane segment spans residues 6–22 (VVLLPVLLAAGWAVRNI). The Cytoplasmic segment spans residues 23–34 (LPYAVKQVQKLL).

Belongs to the PsbY family. As to quaternary structure, PSII is composed of 1 copy each of membrane proteins PsbA, PsbB, PsbC, PsbD, PsbE, PsbF, PsbH, PsbI, PsbJ, PsbK, PsbL, PsbM, PsbT, PsbX, PsbY, PsbZ, Psb30/Ycf12, peripheral proteins PsbO, CyanoQ (PsbQ), PsbU, PsbV and a large number of cofactors. It forms dimeric complexes. This protein is only loosely associated with PSII, and is not often found in crystals. The cofactor is PSII binds multiple chlorophylls, carotenoids and specific lipids..

It localises to the cellular thylakoid membrane. Loosely associated component of the core of photosystem II (PSII). PSII is a light-driven water plastoquinone oxidoreductase, using light energy to abstract electrons from H(2)O, generating a proton gradient subsequently used for ATP formation. The polypeptide is Photosystem II reaction center protein Y (Thermostichus vulcanus (Synechococcus vulcanus)).